A 204-amino-acid polypeptide reads, in one-letter code: Late expression factor 2 (204 aa).

Belongs to the baculoviridae LEF-2 family.

Its function is as follows. Required for late and very late gene expression. Specifically required for expression from the vp39 and polh promoters. The polypeptide is Late expression factor 2 (LEF-2) (Orgyia pseudotsugata (Douglas-fir tussock moth)).